A 372-amino-acid chain; its full sequence is tRNA-specific 2-thiouridylase MnmA (372 aa).

ATP contacts are provided by residues 16–23 and M42; that span reads GMSGGVDS. The segment at 102 to 104 is interaction with target base in tRNA; sequence NPD. C107 serves as the catalytic Nucleophile. A disulfide bridge links C107 with C205. G132 is an ATP binding site. The interaction with tRNA stretch occupies residues 155–157; it reads KDQ. Catalysis depends on C205, which acts as the Cysteine persulfide intermediate. Residues 317–318 are interaction with tRNA; sequence RY.

This sequence belongs to the MnmA/TRMU family.

Its subcellular location is the cytoplasm. It catalyses the reaction S-sulfanyl-L-cysteinyl-[protein] + uridine(34) in tRNA + AH2 + ATP = 2-thiouridine(34) in tRNA + L-cysteinyl-[protein] + A + AMP + diphosphate + H(+). In terms of biological role, catalyzes the 2-thiolation of uridine at the wobble position (U34) of tRNA, leading to the formation of s(2)U34. The sequence is that of tRNA-specific 2-thiouridylase MnmA from Shewanella sp. (strain W3-18-1).